A 153-amino-acid polypeptide reads, in one-letter code: ORM1-like protein 3 (153 aa).

Residues Met-1–Met-17 are important for ceramide level-sensing. At Met-1–Gly-21 the chain is on the cytoplasmic side. The next 2 helical transmembrane spans lie at Ile-22–Ser-44 and Val-45–Phe-63. The Cytoplasmic segment spans residues Leu-64–Lys-100. Residues Phe-101 to Thr-117 traverse the membrane as a helical segment. The Lumenal segment spans residues Lys-118–Gln-121. The chain crosses the membrane as a helical span at residues Ile-122–Leu-139. Pro-137 is subject to Hydroxyproline. The Cytoplasmic portion of the chain corresponds to Pro-140–Tyr-153.

Belongs to the ORM family. In terms of assembly, ceramide-sensitive subunit of the serine palmitoyltransferase (SPT) complex, which is also composed of SPTLC1, SPTLC2/3 and SPTSSA/B. Post-translationally, when hydroxylated at Pro-137, ubiquitinated via 'Lys-48'-linkage, leading to proteasomal degradation. In endothelial cells, ORMDL3 proteasomal degradation is controlled by the sphingosine 1-phosphate receptor signaling pathway. In terms of tissue distribution, widely expressed. Expressed in adult and fetal heart, brain, lung, liver, skeletal muscle and kidney. Expressed in adult pancreas and placenta and in fetal spleen and thymus.

It is found in the endoplasmic reticulum membrane. Plays an essential role in the homeostatic regulation of sphingolipid de novo biosynthesis by modulating the activity of the serine palmitoyltransferase (SPT) in response to ceramide levels. When complexed to SPT, the binding of ceramides to its N-terminus stabilizes a conformation that block SPT substrate entry, hence preventing SPT catalytic activity. Through this mechanism, maintains ceramide levels at sufficient concentrations for the production of complex sphingolipids, but which prevents the accumulation of ceramides to levels that trigger apoptosis. This Homo sapiens (Human) protein is ORM1-like protein 3 (ORMDL3).